A 396-amino-acid polypeptide reads, in one-letter code: Elongation factor Tu (396 aa).

Residues 10 to 206 form the tr-type G domain; that stretch reads KPHVNVGTIG…ALDSYIPTPE (197 aa). The tract at residues 19–26 is G1; sequence GHVDHGKT. Residue 19–26 coordinates GTP; the sequence is GHVDHGKT. Thr26 contributes to the Mg(2+) binding site. The interval 60 to 64 is G2; sequence GITIN. Residues 81 to 84 are G3; sequence DCPG. GTP contacts are provided by residues 81-85 and 136-139; these read DCPGH and NKCD. The segment at 136 to 139 is G4; it reads NKCD. Positions 174-176 are G5; the sequence is SAK.

It belongs to the TRAFAC class translation factor GTPase superfamily. Classic translation factor GTPase family. EF-Tu/EF-1A subfamily. In terms of assembly, monomer.

The protein resides in the cytoplasm. It catalyses the reaction GTP + H2O = GDP + phosphate + H(+). GTP hydrolase that promotes the GTP-dependent binding of aminoacyl-tRNA to the A-site of ribosomes during protein biosynthesis. The sequence is that of Elongation factor Tu from Ralstonia nicotianae (strain ATCC BAA-1114 / GMI1000) (Ralstonia solanacearum).